A 1141-amino-acid polypeptide reads, in one-letter code: Isoleucine--tRNA ligase (1141 aa).

A 'HIGH' region motif is present at residues 50–60 (PSANGMPGIHH). Residues 689-693 (KMSKR) carry the 'KMSKS' region motif. Residue Lys692 participates in ATP binding.

The protein belongs to the class-I aminoacyl-tRNA synthetase family. IleS type 2 subfamily. In terms of assembly, monomer. Zn(2+) is required as a cofactor.

The protein localises to the cytoplasm. The catalysed reaction is tRNA(Ile) + L-isoleucine + ATP = L-isoleucyl-tRNA(Ile) + AMP + diphosphate. Functionally, catalyzes the attachment of isoleucine to tRNA(Ile). As IleRS can inadvertently accommodate and process structurally similar amino acids such as valine, to avoid such errors it has two additional distinct tRNA(Ile)-dependent editing activities. One activity is designated as 'pretransfer' editing and involves the hydrolysis of activated Val-AMP. The other activity is designated 'posttransfer' editing and involves deacylation of mischarged Val-tRNA(Ile). In Bacteroides fragilis (strain YCH46), this protein is Isoleucine--tRNA ligase.